A 295-amino-acid chain; its full sequence is Hepatic leukemia factor (295 aa).

Residues 37–52 show a composition bias toward basic and acidic residues; sequence EDAFSKDKDKEKKLDD. Disordered stretches follow at residues 37–70 and 93–167; these read EDAF…PTLW and SENG…IDPD. The bZIP domain occupies 225–288; sequence DDKYWARRRK…GKCKNILAKY (64 aa). Residues 227–247 are basic motif; that stretch reads KYWARRRKNNMAAKRSRDARR. The interval 248–255 is leucine-zipper; that stretch reads LKENQIAI.

Belongs to the bZIP family. PAR subfamily. In terms of assembly, binds DNA specifically as homodimer or heterodimer with other PAR factors. As to expression, highly expressed in liver; lower levels in lung and kidney.

The protein resides in the nucleus. This Homo sapiens (Human) protein is Hepatic leukemia factor (HLF).